Here is a 287-residue protein sequence, read N- to C-terminus: Energy-coupling factor transporter ATP-binding protein EcfA (287 aa).

One can recognise an ABC transporter domain in the interval 19–252; it reads FEIQNVSFSY…EEFLASSALD (234 aa). 52–59 lines the ATP pocket; the sequence is GHNGSGKS.

It belongs to the ABC transporter superfamily. Energy-coupling factor EcfA family. As to quaternary structure, forms a stable energy-coupling factor (ECF) transporter complex composed of 2 membrane-embedded substrate-binding proteins (S component), 2 ATP-binding proteins (A component) and 2 transmembrane proteins (T component).

The protein localises to the cell membrane. Its function is as follows. ATP-binding (A) component of a common energy-coupling factor (ECF) ABC-transporter complex. Unlike classic ABC transporters this ECF transporter provides the energy necessary to transport a number of different substrates. The chain is Energy-coupling factor transporter ATP-binding protein EcfA from Malacoplasma penetrans (strain HF-2) (Mycoplasma penetrans).